A 103-amino-acid chain; its full sequence is Histone H4 (103 aa).

Residues 1-14 (MSGRGKGGKGLGKG) are compositionally biased toward gly residues. The segment at 1 to 20 (MSGRGKGGKGLGKGGAKRHR) is disordered. Serine 2 is subject to N-acetylserine. 2 positions are modified to N6-acetyl-N6-methyllysine; alternate: lysine 6 and lysine 13. Position 17 is an N6-acetyllysine (lysine 17). A DNA-binding region spans residues 17-21 (KRHRK). Lysine 21 carries the post-translational modification N6-methyllysine.

This sequence belongs to the histone H4 family. In terms of assembly, the nucleosome is a histone octamer containing two molecules each of H2A, H2B, H3 and H4 assembled in one H3-H4 heterotetramer and two H2A-H2B heterodimers. The octamer wraps approximately 147 bp of DNA.

Its subcellular location is the nucleus. The protein localises to the chromosome. Core component of nucleosome. Nucleosomes wrap and compact DNA into chromatin, limiting DNA accessibility to the cellular machineries which require DNA as a template. Histones thereby play a central role in transcription regulation, DNA repair, DNA replication and chromosomal stability. DNA accessibility is regulated via a complex set of post-translational modifications of histones, also called histone code, and nucleosome remodeling. This Holothuria tubulosa (Tubular sea cucumber) protein is Histone H4.